Consider the following 533-residue polypeptide: Yeast-form wall Protein 1 (533 aa).

The N-terminal stretch at 1–21 is a signal peptide; the sequence is MKVSTIFAAASALFAATTTLA. Asn115 is a glycosylation site (N-linked (GlcNAc...) asparagine). 2 disordered regions span residues 161 to 219 and 418 to 451; these read YVPG…GEST and PTKGGEQHQPGSPAGAATSAPGAPAPGASGAHAS. Low complexity-rich tracts occupy residues 163 to 214 and 427 to 451; these read PGSS…ATGA and PGSPAGAATSAPGAPAPGASGAHAS. The GPI-anchor amidated glycine moiety is linked to residue Gly511. A propeptide spans 512–533 (removed in mature form); sequence AAAASAGASVLALALIPLAYFI.

The protein belongs to the flocculin family. In terms of processing, the GPI-anchor is attached to the protein in the endoplasmic reticulum and serves to target the protein to the cell surface. There, the glucosamine-inositol phospholipid moiety is cleaved off and the GPI-modified mannoprotein is covalently attached via its lipidless GPI glycan remnant to the 1,6-beta-glucan of the outer cell wall layer. Post-translationally, cleaved by SAP9 and SAP10, which leads to its release from the cell wall. N-glycosylated.

Its subcellular location is the secreted. The protein localises to the cell wall. The protein resides in the membrane. Cell wall protein which plays an anti-adhesive role and promotes dispersal of yeast forms, which allows the organism to seek new sites for colonization. This chain is Yeast-form wall Protein 1 (YWP1), found in Candida albicans (strain SC5314 / ATCC MYA-2876) (Yeast).